Reading from the N-terminus, the 518-residue chain is Trigger factor (518 aa).

The 86-residue stretch at 170–255 folds into the PPIase FKBP-type domain; sequence GDVVVIDFVG…VKGLESPQEA (86 aa). The interval 447-518 is disordered; sequence EAPAKPAKKA…AKKAAAKKDA (72 aa). Composition is skewed to basic residues over residues 452–468 and 501–518; these read PAKK…KKAA and PAAK…KKDA.

The protein belongs to the FKBP-type PPIase family. Tig subfamily.

The protein resides in the cytoplasm. It catalyses the reaction [protein]-peptidylproline (omega=180) = [protein]-peptidylproline (omega=0). Involved in protein export. Acts as a chaperone by maintaining the newly synthesized protein in an open conformation. Functions as a peptidyl-prolyl cis-trans isomerase. This is Trigger factor from Maricaulis maris (strain MCS10) (Caulobacter maris).